The sequence spans 422 residues: Phagosome assembly factor 1 (422 aa).

It belongs to the PHAF1 family. In terms of assembly, interacts with BCAS3; the interaction is requrired for the association with the phagophore.

It is found in the cytoplasm. It localises to the preautophagosomal structure. Its function is as follows. Plays a regulatory role in autophagic activity. In complex with BCAS3, associates with the autophagosome formation site during both non-selective and selective autophagy. The sequence is that of Phagosome assembly factor 1 from Homo sapiens (Human).